Reading from the N-terminus, the 316-residue chain is MRTTSLLLLLGSLMAVPATQAADASDWLNRLAEADRQNSFQGTFVYERNGSFSTHEIWHRVESDGAVRERLLQLDGARQEVVRVDGRTQCISGGLADQLADAQLWPVRKFDPSQLASWYDLRLVGESRVAGRPAVVLAVTPRDQHRYGFELHLDRDTGLPLKSLLLNEKGQLLERFQFTQLNTGAAPAEDQLQAGAECQVVGPAKADGEKTVAWRSEWLPPGFTLTRSFMRRSPVTPDPVACLTYGDGLARFSVFIEPLHGAMVGDARSQLGPTVVVSKRLQTDDGGQMVTVVGEVPLGTAERVALSIRPEAAAQK.

The first 21 residues, 1–21, serve as a signal peptide directing secretion; the sequence is MRTTSLLLLLGSLMAVPATQA.

The protein belongs to the RseB family.

It localises to the periplasm. Negative regulator of the sigma factor AlgU. Plays a role in the differentiation of P.aeruginosa into the alginate-producing form. Inactivation of mucB causes conversion to mucoidy. The protein is Sigma factor AlgU regulatory protein MucB (mucB) of Pseudomonas aeruginosa (strain ATCC 15692 / DSM 22644 / CIP 104116 / JCM 14847 / LMG 12228 / 1C / PRS 101 / PAO1).